Reading from the N-terminus, the 291-residue chain is MTTLAIDIGGTKLAAALIGADGQIRDRRELPTPASQTPEALRDALSALVSPLQAHAQRVAIASTGIIRDGSLLALNPHNLGGLLHFPLVKTLEQLTNLPTIAINDAQAAAWAEYQALEGDITDMVFITVSTGVGGGVVSGGKLLTGPGGLAGHIGHTLADPHGPVCGCGRTGCVEAIASGRGIAAAAQGELAGADARTIFTRAGQGDEQAQQLIHLSARTLARLIADIKATTDCQCVVVGGSVGLAEGYLALVEMYLAQEPAAFHVDLLAAHYRHDAGLLGAALLAQGEKL.

ATP is bound by residues 5–12 (AIDIGGTK) and 132–139 (GVGGGVVS). Zn(2+) is bound by residues His156, Cys166, Cys168, and Cys173.

It belongs to the ROK (NagC/XylR) family. NanK subfamily. In terms of assembly, homodimer.

The catalysed reaction is an N-acyl-D-mannosamine + ATP = an N-acyl-D-mannosamine 6-phosphate + ADP + H(+). It functions in the pathway amino-sugar metabolism; N-acetylneuraminate degradation; D-fructose 6-phosphate from N-acetylneuraminate: step 2/5. In terms of biological role, catalyzes the phosphorylation of N-acetylmannosamine (ManNAc) to ManNAc-6-P. This Escherichia coli (strain 55989 / EAEC) protein is N-acetylmannosamine kinase.